Reading from the N-terminus, the 752-residue chain is Catalase-peroxidase 1 (752 aa).

A disordered region spans residues 1–45; the sequence is MPPNTPDASDARPPQADTETHSHSESENPVIESPKPKAHAPLTNQ. The segment at residues 116–244 is a cross-link (tryptophyl-tyrosyl-methioninium (Trp-Tyr) (with M-270)); it reads WHAAGTYRIF…YGATTMGLIY (129 aa). His-117 functions as the Proton acceptor in the catalytic mechanism. A cross-link (tryptophyl-tyrosyl-methioninium (Tyr-Met) (with W-116)) is located at residues 244-270; that stretch reads YVNPEGPEGKPDPLAAAHDIRETFGRM. Residue His-285 coordinates heme b.

This sequence belongs to the peroxidase family. Peroxidase/catalase subfamily. Homodimer or homotetramer. Heme b is required as a cofactor. In terms of processing, formation of the three residue Trp-Tyr-Met cross-link is important for the catalase, but not the peroxidase activity of the enzyme.

It carries out the reaction H2O2 + AH2 = A + 2 H2O. The enzyme catalyses 2 H2O2 = O2 + 2 H2O. Bifunctional enzyme with both catalase and broad-spectrum peroxidase activity. May play a role in the intracellular survival of mycobacteria. This chain is Catalase-peroxidase 1, found in Mycolicibacterium fortuitum (Mycobacterium fortuitum).